We begin with the raw amino-acid sequence, 228 residues long: Probable septum site-determining protein MinC (228 aa).

This sequence belongs to the MinC family. As to quaternary structure, interacts with MinD and FtsZ.

In terms of biological role, cell division inhibitor that blocks the formation of polar Z ring septums. Rapidly oscillates between the poles of the cell to destabilize FtsZ filaments that have formed before they mature into polar Z rings. Prevents FtsZ polymerization. In Yersinia pseudotuberculosis serotype O:1b (strain IP 31758), this protein is Probable septum site-determining protein MinC.